Reading from the N-terminus, the 1481-residue chain is MQRSPLEKASVVSKLFFSWTRPILKKGYRQRLELSDIYHISSSDSADNLSEKLEREWDRELASKKNPKLINALRRCFFWRFMFYGIILYLGEVTKAVQPLLLGRIIASYDPDNKAERSIAIYLGIGLCLLFIVRTLLLHPAIFGLHHIGMQMRIAMFSLIYKKTLKLSSRVLDKISIGQLVSLLSNNLNKFDEGLALAHFVWIAPLQVTLLMGLLWELLQAFTFCGLAFLVVLAFLQAGLGKMMMKYRDQRAGKINERLVITSEIIENIQSVKAYCWEEAMEKIIENLRQTELKLTRKAAYVRYLNSSAFFFSGFFVVFLSVLPYALLKGIILRKIFTTISFCIVLRMAVTRQFPWAVQTWYDSLGAINKIQDFLQKQEYKTLEYNLTTTDVVMENVTAYWEEGFSKLFEKAKENNNNRKISNGDNNLFFSNLLLGAPVLKDISFKIERGQLMAVAGSTGAGKTSLLMMIMGELEPSEGKIKHSGRISFCSQYSWIMPGTIKDNIIFGVSYDEYRYRSVIKACQLEEDISKFAEKDNIVLGEGGITLSGGQRARISLARAVYKDADLYLLDSPFGYLDVLTEKEIFESCVCKLMANKTRILVTSKMEHLKKADKILILHEGSIYFYGTFSELQNQRPDFSSKLMGCDTFDQFTAERRNSIITETLRRFSLEGDTSVSWNETKKPSFKQTGEFGEKRKNSILNSINSKRKFSVAQKTSLQMNGIEETSDEPLERKLSLVPHSEPGEGILPRSNAVNSGPTFLGGRRQSVLNLMTCSSVNQGQSIHRKTATSTRKMSLAPQASLAEIDIYSRRLSQDTGLEISEEINEEDLRDCFFDDVENIPAVTTWNTYLRYITVHKSLMFVLIWCLVVFLAEVAASLVVLCLFPKILFQDKGNSTKSANNSYAVIITSTSSYYIFYIYVGVADTLLALGLFRGLPLVHTLITVSKTLHHKMLQSVLQAPMSTLNTLKTGGILNRFSKDIAVLDDLLPLTIFDFVQLLLIVIGAVVVVSVLQPYIFLATVPVIAAFILLRAYFLHTSQQLKQLESEGRSPIFTHLVTSLKGLWTLRAFGRQPYFETLFHKALNLHTANWFLYLSTLRWFQMRIEMIFVIFFIAVTFISILTTGEGEGRVGIILTLAMNIMGTLQWAVNSSIDVDSLMRSVSRVFKFIDMPTEDGKPNNSFRPSKDSQLSKVMVIENQHVKKDDIWPSGGQMTVKDLTAKYIDGGNAILENISFSISPGQRVGLLGRTGSGKSTLLLAFLRLLNTKGEIQIDGVSWDSITLQQWRKAFGVIPQKVFIFSGTFRKNLDPYGQWSDQEIWKVADEVGLRSVIEQFPGKLDFVLVDGGCVLSHGHKQLMCLARSVLSKAKILLLDEPSAHLDPITYQIIRRTLKQAFADCTVILSEHRIEAMLECQRFLVIEENKVRQYDSIQRMLSEKSLFRQAISPADRLKLLPQRNSSRQKSRSNIAALKEETEEEVQETKI.

Topologically, residues 1 to 77 (MQRSPLEKAS…KLINALRRCF (77 aa)) are cytoplasmic. A helical membrane pass occupies residues 78-98 (FWRFMFYGIILYLGEVTKAVQ). Residues 81–365 (FMFYGIILYL…WAVQTWYDSL (285 aa)) enclose the ABC transmembrane type-1 1 domain. Over 99-122 (PLLLGRIIASYDPDNKAERSIAIY) the chain is Extracellular. A helical membrane pass occupies residues 123 to 146 (LGIGLCLLFIVRTLLLHPAIFGLH). At 147 to 195 (HIGMQMRIAMFSLIYKKTLKLSSRVLDKISIGQLVSLLSNNLNKFDEGL) the chain is on the cytoplasmic side. Residues 196–216 (ALAHFVWIAPLQVTLLMGLLW) traverse the membrane as a helical segment. Residues 217–222 (ELLQAF) lie on the Extracellular side of the membrane. Residues 223–243 (TFCGLAFLVVLAFLQAGLGKM) form a helical membrane-spanning segment. The Cytoplasmic segment spans residues 244–298 (MMKYRDQRAGKINERLVITSEIIENIQSVKAYCWEEAMEKIIENLRQTELKLTRK). Residues 299–319 (AAYVRYLNSSAFFFSGFFVVF) traverse the membrane as a helical segment. Over 320–339 (LSVLPYALLKGIILRKIFTT) the chain is Extracellular. A helical membrane pass occupies residues 340-358 (ISFCIVLRMAVTRQFPWAV). Residues 359-858 (QTWYDSLGAI…YLRYITVHKS (500 aa)) lie on the Cytoplasmic side of the membrane. Residues Trp401, 457–464 (GSTGAGKT), and Gln492 each bind ATP. In terms of domain architecture, ABC transporter 1 spans 423-645 (NGDNNLFFSN…RPDFSSKLMG (223 aa)). Residue Cys523 is the site of S-palmitoyl cysteine attachment. 2 positions are modified to phosphoserine: Ser548 and Ser659. The disordered R region stretch occupies residues 653-831 (TAERRNSIIT…EEINEEDLRD (179 aa)). The residue at position 669 (Ser669) is a Phosphoserine; by PKA. Ser685 carries the phosphoserine modification. Lys687 is covalently cross-linked (Glycyl lysine isopeptide (Lys-Gly) (interchain with G-Cter in ubiquitin)). Phosphoserine occurs at positions 699 and 711. Thr716 is subject to Phosphothreonine. Ser736, Ser767, Ser790, Ser795, and Ser813 each carry phosphoserine. A helical membrane pass occupies residues 859–879 (LMFVLIWCLVVFLAEVAASLV). An ABC transmembrane type-1 2 domain is found at 859–1155 (LMFVLIWCLV…AVNSSIDVDS (297 aa)). The Extracellular portion of the chain corresponds to 880 to 918 (VLCLFPKILFQDKGNSTKSANNSYAVIITSTSSYYIFYI). N-linked (GlcNAc...) asparagine glycosylation is found at Asn894 and Asn900. The chain crosses the membrane as a discontinuously helical span at residues 919-939 (YVGVADTLLALGLFRGLPLVH). Over 940–990 (TLITVSKTLHHKMLQSVLQAPMSTLNTLKTGGILNRFSKDIAVLDDLLPLT) the chain is Cytoplasmic. A helical membrane pass occupies residues 991–1011 (IFDFVQLLLIVIGAVVVVSVL). At 1012 to 1013 (QP) the chain is on the extracellular side. The helical transmembrane segment at 1014–1034 (YIFLATVPVIAAFILLRAYFL) threads the bilayer. Over 1035–1095 (HTSQQLKQLE…TANWFLYLST (61 aa)) the chain is Cytoplasmic. The helical transmembrane segment at 1096 to 1116 (LRWFQMRIEMIFVIFFIAVTF) threads the bilayer. Over 1117–1130 (ISILTTGEGEGRVG) the chain is Extracellular. A helical membrane pass occupies residues 1131–1151 (IILTLAMNIMGTLQWAVNSSI). At 1152 to 1481 (DVDSLMRSVS…TEEEVQETKI (330 aa)) the chain is on the cytoplasmic side. An ABC transporter 2 domain is found at 1211-1444 (MTVKDLTAKY…KSLFRQAISP (234 aa)). Residues Tyr1220 and 1245–1252 (GRTGSGKS) contribute to the ATP site. Residues 1387 to 1481 (RTLKQAFADC…TEEEVQETKI (95 aa)) are interaction with GORASP2. The S-palmitoyl cysteine moiety is linked to residue Cys1396. The disordered stretch occupies residues 1452-1481 (PQRNSSRQKSRSNIAALKEETEEEVQETKI). Residues 1453 to 1464 (QRNSSRQKSRSN) are compositionally biased toward low complexity. Phosphoserine is present on Ser1457. A compositionally biased stretch (acidic residues) spans 1471 to 1481 (ETEEEVQETKI). The short motif at 1479–1481 (TKI) is the PDZ-binding element.

It belongs to the ABC transporter superfamily. ABCC family. CFTR transporter (TC 3.A.1.202) subfamily. As to quaternary structure, monomer; does not require oligomerization for channel activity. May form oligomers in the membrane. Interacts with SLC26A3, SLC26A6 and NHERF1. Interacts with SHANK2. Interacts with MYO6. Interacts (via C-terminus) with GOPC (via PDZ domain); this promotes CFTR internalization and thereby decreases channel activity. Interacts with SLC4A7 through NHERF1. Found in a complex with MYO5B and RAB11A. Interacts with ANO1. Interacts with SLC26A8. Interacts with AHCYL1; the interaction increases CFTR activity. Interacts with CSE1L. The core-glycosylated form interacts with GORASP2 (via PDZ GRASP-type 1 domain) in respone to ER stress. Interacts with MARCHF2; the interaction leads to CFTR ubiqtuitination and degradation. Interacts with ADGRG2. In terms of processing, N-glycosylated. Post-translationally, phosphorylated; cAMP treatment promotes phosphorylation and activates the channel. Dephosphorylation decreases the ATPase activity (in vitro). Phosphorylation at PKA sites activates the channel. Phosphorylation at PKC sites enhances the response to phosphorylation by PKA. Phosphorylated by AMPK; this inhibits channel activity. Ubiquitinated, leading to its degradation in the lysosome. Deubiquitination by USP10 in early endosomes enhances its endocytic recycling to the cell membrane. Ubiquitinated by RNF185 during ER stress. Ubiquitinated by MARCHF2.

The protein localises to the apical cell membrane. It localises to the early endosome membrane. It is found in the cell membrane. The protein resides in the recycling endosome membrane. Its subcellular location is the endoplasmic reticulum membrane. The protein localises to the nucleus. The catalysed reaction is ATP + H2O + closed Cl(-) channel = ADP + phosphate + open Cl(-) channel.. The enzyme catalyses chloride(in) = chloride(out). It carries out the reaction hydrogencarbonate(in) = hydrogencarbonate(out). It catalyses the reaction ATP + H2O = ADP + phosphate + H(+). In terms of biological role, epithelial ion channel that plays an important role in the regulation of epithelial ion and water transport and fluid homeostasis. Mediates the transport of chloride ions across the cell membrane. Possesses an intrinsic ATPase activity and utilizes ATP to gate its channel; the passive flow of anions through the channel is gated by cycles of ATP binding and hydrolysis by the ATP-binding domains. The ion channel is also permeable to HCO(3)(-); selectivity depends on the extracellular chloride concentration. Exerts its function also by modulating the activity of other ion channels and transporters. Contributes to the regulation of the pH and the ion content of the epithelial fluid layer. Modulates the activity of the epithelial sodium channel (ENaC) complex, in part by regulating the cell surface expression of the ENaC complex. May regulate bicarbonate secretion and salvage in epithelial cells by regulating the transporter SLC4A7. Can inhibit the chloride channel activity of ANO1. Plays a role in the chloride and bicarbonate homeostasis during sperm epididymal maturation and capacitation. The protein is Cystic fibrosis transmembrane conductance regulator of Muntiacus reevesi (Reeves' muntjac).